Consider the following 279-residue polypeptide: 2'-N-acetylparomamine deacetylase (279 aa).

Zn(2+) contacts are provided by histidine 31, aspartate 34, and histidine 157. Positions 245–279 (PRRWTGGTAGAGHAAGRRGAPHTERVWTPAPAGAR) are disordered. The span at 246–258 (RRWTGGTAGAGHA) shows a compositional bias: low complexity.

It belongs to the PIGL family. Requires Zn(2+) as cofactor.

It catalyses the reaction 2'-N-acetylparomamine + H2O = paromamine + acetate. It carries out the reaction 2'''-acetyl-6'''-hydroxyneomycin C + H2O = 6'''-deamino-6'''-hydroxyneomycin C + acetate. The protein operates within antibiotic biosynthesis; neomycin biosynthesis. Functionally, deacetylase involved in the biosynthesis of neomycin by mediating 2 steps of the pathway. Deacetylates both 2'-N-acetylparomamine and 2'''-acetyl-6'''-hydroxyneomycin C. In Streptomyces fradiae (Streptomyces roseoflavus), this protein is 2'-N-acetylparomamine deacetylase (neoL).